Here is a 78-residue protein sequence, read N- to C-terminus: UPF0291 protein MCCL_0996 (78 aa).

It belongs to the UPF0291 family.

Its subcellular location is the cytoplasm. This Macrococcus caseolyticus (strain JCSC5402) (Macrococcoides caseolyticum) protein is UPF0291 protein MCCL_0996.